The following is a 325-amino-acid chain: DNA-directed RNA polymerase subunit alpha (325 aa).

The tract at residues 1 to 231 (MQNSLLKPRI…DQLNVFAALE (231 aa)) is alpha N-terminal domain (alpha-NTD). Residues 246 to 325 (VDPILLRPVD…ENWPPAGLEK (80 aa)) are alpha C-terminal domain (alpha-CTD).

It belongs to the RNA polymerase alpha chain family. As to quaternary structure, homodimer. The RNAP catalytic core consists of 2 alpha, 1 beta, 1 beta' and 1 omega subunit. When a sigma factor is associated with the core the holoenzyme is formed, which can initiate transcription.

The enzyme catalyses RNA(n) + a ribonucleoside 5'-triphosphate = RNA(n+1) + diphosphate. Functionally, DNA-dependent RNA polymerase catalyzes the transcription of DNA into RNA using the four ribonucleoside triphosphates as substrates. In Herminiimonas arsenicoxydans, this protein is DNA-directed RNA polymerase subunit alpha.